The primary structure comprises 249 residues: MSRLRTSHALRTAAALVAVGCLASGCSSIERLSQIGEQPKLTAIDNPTTKAGYKPVSMPMPTPQPASYNPNSLWRNGSRAFFKDQRAHQVGDILTVIVNITDKANIANETQRSRANTEDSSITNFFGIKKVPGTNGAGNMLTTGSVASSDGKGSVVRQEALQTNVAAVVTQLLPNGNLVVEGKQEIRVNFEMRELVVAGIVRPEDIQSDNTIDSSKIAQARIAYGGRGQITDVQQPRYGQQVMDILLPF.

The N-terminal stretch at 1–25 (MSRLRTSHALRTAAALVAVGCLASG) is a signal peptide. C26 is lipidated: N-palmitoyl cysteine. C26 is lipidated: S-diacylglycerol cysteine.

This sequence belongs to the FlgH family. The basal body constitutes a major portion of the flagellar organelle and consists of four rings (L,P,S, and M) mounted on a central rod.

Its subcellular location is the cell outer membrane. The protein localises to the bacterial flagellum basal body. Assembles around the rod to form the L-ring and probably protects the motor/basal body from shearing forces during rotation. The sequence is that of Flagellar L-ring protein from Afipia carboxidovorans (strain ATCC 49405 / DSM 1227 / KCTC 32145 / OM5) (Oligotropha carboxidovorans).